The sequence spans 128 residues: Azurin (128 aa).

The Plastocyanin-like domain maps to 1-128 (AECSVDIQGN…ALMKGTLTLK (128 aa)). A disulfide bridge connects residues Cys-3 and Cys-26. The Cu cation site is built by His-46, Cys-112, His-117, and Met-121.

The protein localises to the periplasm. Functionally, transfers electrons from cytochrome c551 to cytochrome oxidase. This chain is Azurin, found in Pseudomonas aeruginosa.